The chain runs to 756 residues: Neutral ceramidase (756 aa).

Residues 1-11 (MAKRTFSTLEA) lie on the Cytoplasmic side of the membrane. Residues 12 to 32 (FLIFLLVIMTVITVALLTLLF) traverse the membrane as a helical; Signal-anchor for type II membrane protein segment. Residues 33-756 (VTSGTIENHK…ISSPFEVVTT (724 aa)) are Lumenal-facing. O-linked (GalNAc...) threonine glycans are attached at residues T56, T57, T58, and T64. L110 serves as a coordination point for Ca(2+). Position 170 (H170) interacts with Zn(2+). N193 carries an N-linked (GlcNAc...) asparagine glycan. Residue H279 coordinates Zn(2+). S330 functions as the Nucleophile in the catalytic mechanism. Disulfide bonds link C338-C352 and C345-C360. 2 N-linked (GlcNAc...) asparagine glycosylation sites follow: N407 and N444. Residues C424 and C474 are joined by a disulfide bond. Residues E516 and Y555 each contribute to the Zn(2+) site. D688, S690, and T693 together coordinate Ca(2+). Positions 746–756 (GISSPFEVVTT) are required for correct folding and localization.

This sequence belongs to the neutral ceramidase family. May interact with CAV1. It depends on Zn(2+) as a cofactor. Post-translationally, proteolytic cleavage of the N-terminus removes the signal-anchor and produces a soluble form of the protein. N-glycosylated. Required for enzyme activity. In terms of processing, O-glycosylated. Required to retain it as a type II membrane protein at the cell surface. Post-translationally, phosphorylated. May prevent ubiquitination and subsequent degradation. Ubiquitinated, leading to its degradation by the proteasome. Ubiquitination is triggered by nitric oxide. In terms of tissue distribution, widely expressed. Strongly expressed in small intestine and to a lower extent in liver and kidney. Highly expressed in duodenum, jejunum and ileum along the brush border of the small intestine (at protein level).

The protein localises to the cell membrane. The protein resides in the membrane raft. Its subcellular location is the membrane. It is found in the caveola. It localises to the golgi apparatus membrane. The protein localises to the mitochondrion. The protein resides in the secreted. Its subcellular location is the extracellular exosome. It catalyses the reaction an N-acylsphing-4-enine + H2O = sphing-4-enine + a fatty acid. It carries out the reaction N-hexadecanoylsphing-4-enine + H2O = sphing-4-enine + hexadecanoate. The catalysed reaction is N-dodecanoylsphing-4-enine + H2O = dodecanoate + sphing-4-enine. The enzyme catalyses N-octadecanoylsphing-4-enine + H2O = sphing-4-enine + octadecanoate. It catalyses the reaction N-octanoylsphing-4-enine + H2O = octanoate + sphing-4-enine. It carries out the reaction N-(hexanoyl)sphing-4-enine + H2O = hexanoate + sphing-4-enine. The catalysed reaction is N-tetradecanoylsphing-4-enine + H2O = tetradecanoate + sphing-4-enine. The enzyme catalyses N-(9Z-octadecenoyl)-sphing-4-enine + H2O = sphing-4-enine + (9Z)-octadecenoate. It catalyses the reaction N-(15Z-tetracosenoyl)-sphing-4-enine + H2O = (15Z)-tetracosenoate + sphing-4-enine. It carries out the reaction sphinganine + hexadecanoate = N-hexadecanoylsphinganine + H2O. The catalysed reaction is N-(octadecanoyl)-sphinganine + H2O = sphinganine + octadecanoate. It functions in the pathway lipid metabolism; sphingolipid metabolism. With respect to regulation, inhibited by D-erythro-MAPP. Its function is as follows. Plasma membrane ceramidase that hydrolyzes sphingolipid ceramides into sphingosine and free fatty acids at neutral pH. Ceramides, sphingosine, and its phosphorylated form sphingosine-1-phosphate are bioactive lipids that mediate cellular signaling pathways regulating several biological processes including cell proliferation, apoptosis and differentiation. Also catalyzes the reverse reaction allowing the synthesis of ceramides from fatty acids and sphingosine. Together with sphingomyelinase, participates in the production of sphingosine and sphingosine-1-phosphate from the degradation of sphingomyelin, a sphingolipid enriched in the plasma membrane of cells. Also participates in the hydrolysis of ceramides from the extracellular milieu allowing the production of sphingosine-1-phosphate inside and outside cells. This is the case for instance with the digestion of dietary sphingolipids in the intestinal tract. This chain is Neutral ceramidase (Asah2), found in Mus musculus (Mouse).